A 48-amino-acid chain; its full sequence is Large ribosomal subunit protein bL33A (48 aa).

Belongs to the bacterial ribosomal protein bL33 family.

The polypeptide is Large ribosomal subunit protein bL33A (Bacillus mycoides (strain KBAB4) (Bacillus weihenstephanensis)).